A 595-amino-acid polypeptide reads, in one-letter code: Tyrosine-protein phosphatase cdcA (595 aa).

Positions 32 to 57 (TPFPYPAEQPKSPSKRRAQASPSKKR) are disordered. Over residues 44–57 (PSKRRAQASPSKKR) the composition is skewed to basic residues. In terms of domain architecture, Tyrosine-protein phosphatase spans 233 to 381 (LPSTVSEVRS…QGSFREWWFE (149 aa)). Cys-322 acts as the Phosphocysteine intermediate in catalysis. The tract at residues 392 to 595 (QPNPVTPGRS…GSPVRVKAQA (204 aa)) is disordered. A compositionally biased stretch (basic residues) spans 449–461 (RKSHRKDSRHHPY). Positions 471–483 (VDKDTRKTRRSTD) are enriched in basic and acidic residues. Residues 502–526 (SKSPAASPGQRSISYSATVTASYTL) show a composition bias toward polar residues.

This sequence belongs to the protein-tyrosine phosphatase family. Non-receptor class CDC14 subfamily.

The protein localises to the nucleus. The protein resides in the cytoplasm. Its subcellular location is the cell septum. It catalyses the reaction O-phospho-L-tyrosyl-[protein] + H2O = L-tyrosyl-[protein] + phosphate. Protein phosphatase which antagonizes mitotic cyclin-dependent kinase nimX, the inactivation of which is essential for exit from mitosis. To access its substrates, is released from nucleolar sequestration during mitosis. Plays an essential in coordinating the nuclear division cycle with cytokinesis through the cytokinesis checkpoint. Involved in chromosome segregation, where it is required for meiosis I spindle dissambly as well as for establishing two consecutive chromosome segregation phases. Required for the transcription of the two major endoglucanase genes eglA and eglB and growth on synthetic cellulose as the sole carbon source. The polypeptide is Tyrosine-protein phosphatase cdcA (cdcA) (Emericella nidulans (strain FGSC A4 / ATCC 38163 / CBS 112.46 / NRRL 194 / M139) (Aspergillus nidulans)).